The chain runs to 638 residues: 1-deoxy-D-xylulose-5-phosphate synthase (638 aa).

Residues His-75 and 116 to 118 each bind thiamine diphosphate; that span reads AHS. Asp-147 contacts Mg(2+). Residues 148-149, Asn-177, Tyr-288, and Glu-370 contribute to the thiamine diphosphate site; that span reads GA. Position 177 (Asn-177) interacts with Mg(2+).

It belongs to the transketolase family. DXPS subfamily. In terms of assembly, homodimer. It depends on Mg(2+) as a cofactor. Thiamine diphosphate serves as cofactor.

It catalyses the reaction D-glyceraldehyde 3-phosphate + pyruvate + H(+) = 1-deoxy-D-xylulose 5-phosphate + CO2. It participates in metabolic intermediate biosynthesis; 1-deoxy-D-xylulose 5-phosphate biosynthesis; 1-deoxy-D-xylulose 5-phosphate from D-glyceraldehyde 3-phosphate and pyruvate: step 1/1. Functionally, catalyzes the acyloin condensation reaction between C atoms 2 and 3 of pyruvate and glyceraldehyde 3-phosphate to yield 1-deoxy-D-xylulose-5-phosphate (DXP). The sequence is that of 1-deoxy-D-xylulose-5-phosphate synthase from Cupriavidus necator (strain ATCC 17699 / DSM 428 / KCTC 22496 / NCIMB 10442 / H16 / Stanier 337) (Ralstonia eutropha).